Reading from the N-terminus, the 130-residue chain is Sulfurtransferase TusD (130 aa).

The active-site Cysteine persulfide intermediate is the Cys80.

This sequence belongs to the DsrE/TusD family. Heterohexamer, formed by a dimer of trimers. The hexameric TusBCD complex contains 2 copies each of TusB, TusC and TusD. The TusBCD complex interacts with TusE.

It is found in the cytoplasm. In terms of biological role, part of a sulfur-relay system required for 2-thiolation of 5-methylaminomethyl-2-thiouridine (mnm(5)s(2)U) at tRNA wobble positions. Accepts sulfur from TusA and transfers it in turn to TusE. This chain is Sulfurtransferase TusD, found in Sodalis glossinidius (strain morsitans).